We begin with the raw amino-acid sequence, 213 residues long: Ribosomal RNA small subunit methyltransferase G (213 aa).

S-adenosyl-L-methionine contacts are provided by residues G83, L88, I132–E133, and R146.

Belongs to the methyltransferase superfamily. RNA methyltransferase RsmG family.

Its subcellular location is the cytoplasm. The catalysed reaction is guanosine(527) in 16S rRNA + S-adenosyl-L-methionine = N(7)-methylguanosine(527) in 16S rRNA + S-adenosyl-L-homocysteine. In terms of biological role, specifically methylates the N7 position of guanine in position 527 of 16S rRNA. This chain is Ribosomal RNA small subunit methyltransferase G, found in Granulibacter bethesdensis (strain ATCC BAA-1260 / CGDNIH1).